The following is a 350-amino-acid chain: Putative aminopeptidase MJ0555 (350 aa).

A divalent metal cation is bound by residues His62 and Asp175. Glu207 acts as the Proton acceptor in catalysis. 3 residues coordinate a divalent metal cation: Glu208, Asp230, and His321.

The protein belongs to the peptidase M42 family. It depends on a divalent metal cation as a cofactor.

The chain is Putative aminopeptidase MJ0555 from Methanocaldococcus jannaschii (strain ATCC 43067 / DSM 2661 / JAL-1 / JCM 10045 / NBRC 100440) (Methanococcus jannaschii).